We begin with the raw amino-acid sequence, 557 residues long: Nicotinate phosphoribosyltransferase 2 (557 aa).

Tyr31 and Thr219 together coordinate nicotinate. His222 carries the post-translational modification Phosphohistidine. A nicotinate-binding site is contributed by Arg329. Thr391 is a 5-phospho-alpha-D-ribose 1-diphosphate binding site.

The protein belongs to the NAPRTase family. Requires Mg(2+) as cofactor. The cofactor is Mn(2+). Transiently phosphorylated on a His residue during the reaction cycle. Phosphorylation strongly increases the affinity for substrates and increases the rate of nicotinate D-ribonucleotide production. Dephosphorylation regenerates the low-affinity form of the enzyme, leading to product release.

The enzyme catalyses nicotinate + 5-phospho-alpha-D-ribose 1-diphosphate + ATP + H2O = nicotinate beta-D-ribonucleotide + ADP + phosphate + diphosphate. It functions in the pathway cofactor biosynthesis; NAD(+) biosynthesis; nicotinate D-ribonucleotide from nicotinate: step 1/1. Catalyzes the first step in the biosynthesis of NAD from nicotinic acid, the ATP-dependent synthesis of beta-nicotinate D-ribonucleotide from nicotinate and 5-phospho-D-ribose 1-phosphate. Helps prevent cellular oxidative stress via its role in NAD biosynthesis. This chain is Nicotinate phosphoribosyltransferase 2, found in Arabidopsis thaliana (Mouse-ear cress).